The following is a 158-amino-acid chain: Endoribonuclease YbeY (158 aa).

Zn(2+) contacts are provided by His-118, His-122, and His-128.

This sequence belongs to the endoribonuclease YbeY family. The cofactor is Zn(2+).

The protein localises to the cytoplasm. Single strand-specific metallo-endoribonuclease involved in late-stage 70S ribosome quality control and in maturation of the 3' terminus of the 16S rRNA. This Bartonella quintana (strain Toulouse) (Rochalimaea quintana) protein is Endoribonuclease YbeY.